A 445-amino-acid polypeptide reads, in one-letter code: Argininosuccinate synthase (445 aa).

Residues 17–25 (AFSGGLDTS) and alanine 43 each bind ATP. Residue tyrosine 99 coordinates L-citrulline. Glycine 129 and threonine 131 together coordinate ATP. 3 residues coordinate L-aspartate: threonine 131, asparagine 135, and aspartate 136. Position 135 (asparagine 135) interacts with L-citrulline. Aspartate 136 is an ATP binding site. The L-citrulline site is built by arginine 139 and serine 192. Aspartate 194 is a binding site for ATP. Residues threonine 201, glutamate 203, and glutamate 280 each coordinate L-citrulline.

Belongs to the argininosuccinate synthase family. Type 2 subfamily. Homotetramer.

It localises to the cytoplasm. The catalysed reaction is L-citrulline + L-aspartate + ATP = 2-(N(omega)-L-arginino)succinate + AMP + diphosphate + H(+). It functions in the pathway amino-acid biosynthesis; L-arginine biosynthesis; L-arginine from L-ornithine and carbamoyl phosphate: step 2/3. The chain is Argininosuccinate synthase from Ralstonia pickettii (strain 12J).